We begin with the raw amino-acid sequence, 310 residues long: Phosphoribosylaminoimidazole-succinocarboxamide synthase (310 aa).

Belongs to the SAICAR synthetase family.

It catalyses the reaction 5-amino-1-(5-phospho-D-ribosyl)imidazole-4-carboxylate + L-aspartate + ATP = (2S)-2-[5-amino-1-(5-phospho-beta-D-ribosyl)imidazole-4-carboxamido]succinate + ADP + phosphate + 2 H(+). It participates in purine metabolism; IMP biosynthesis via de novo pathway; 5-amino-1-(5-phospho-D-ribosyl)imidazole-4-carboxamide from 5-amino-1-(5-phospho-D-ribosyl)imidazole-4-carboxylate: step 1/2. In Xanthomonas axonopodis pv. citri (strain 306), this protein is Phosphoribosylaminoimidazole-succinocarboxamide synthase.